We begin with the raw amino-acid sequence, 404 residues long: Dual-specificity RNA methyltransferase RlmN (404 aa).

The active-site Proton acceptor is the Glu119. The 233-residue stretch at 126-358 folds into the Radical SAM core domain; that stretch reads VGRAGALCVS…NKAGYSSPIR (233 aa). Cys133 and Cys369 are joined by a disulfide. The [4Fe-4S] cluster site is built by Cys140, Cys144, and Cys147. S-adenosyl-L-methionine-binding positions include 195–196, Ser227, 249–251, and Asn326; these read GE and SLH. Cys369 functions as the S-methylcysteine intermediate in the catalytic mechanism.

Belongs to the radical SAM superfamily. RlmN family. It depends on [4Fe-4S] cluster as a cofactor.

The protein resides in the cytoplasm. It carries out the reaction adenosine(2503) in 23S rRNA + 2 reduced [2Fe-2S]-[ferredoxin] + 2 S-adenosyl-L-methionine = 2-methyladenosine(2503) in 23S rRNA + 5'-deoxyadenosine + L-methionine + 2 oxidized [2Fe-2S]-[ferredoxin] + S-adenosyl-L-homocysteine. The enzyme catalyses adenosine(37) in tRNA + 2 reduced [2Fe-2S]-[ferredoxin] + 2 S-adenosyl-L-methionine = 2-methyladenosine(37) in tRNA + 5'-deoxyadenosine + L-methionine + 2 oxidized [2Fe-2S]-[ferredoxin] + S-adenosyl-L-homocysteine. Functionally, specifically methylates position 2 of adenine 2503 in 23S rRNA and position 2 of adenine 37 in tRNAs. m2A2503 modification seems to play a crucial role in the proofreading step occurring at the peptidyl transferase center and thus would serve to optimize ribosomal fidelity. The protein is Dual-specificity RNA methyltransferase RlmN of Caulobacter sp. (strain K31).